A 259-amino-acid chain; its full sequence is Protein unc-50 homolog (259 aa).

Methionine 1 bears the N-acetylmethionine mark. At methionine 1–proline 82 the chain is on the cytoplasmic side. Residue serine 6 is modified to Phosphoserine. A helical membrane pass occupies residues alanine 83–leucine 103. Over aspartate 104–leucine 115 the chain is Lumenal. Residues tryptophan 116–isoleucine 136 form a helical membrane-spanning segment. Over serine 137–alanine 163 the chain is Cytoplasmic. Residues phenylalanine 164–leucine 184 traverse the membrane as a helical segment. The Lumenal portion of the chain corresponds to threonine 185 to threonine 187. Residues phenylalanine 188–valine 208 traverse the membrane as a helical segment. At threonine 209 to threonine 222 the chain is on the cytoplasmic side. A helical membrane pass occupies residues valine 223–glycine 243. The Lumenal segment spans residues tryptophan 244–lysine 259.

It belongs to the unc-50 family. In terms of tissue distribution, expressed in brain, kidney and testis, and at lower levels in heart.

The protein localises to the nucleus inner membrane. It localises to the golgi apparatus membrane. In terms of biological role, involved in the cell surface expression of neuronal nicotinic receptors. Binds RNA. This Rattus norvegicus (Rat) protein is Protein unc-50 homolog (Unc50).